The primary structure comprises 403 residues: Large ribosomal subunit protein uL3 (403 aa).

The interval 1 to 38 (MSHRKFSAPRHGSLGFLPRKRSSRHRGKVKSFPKDDSS) is disordered. A Phosphoserine modification is found at Ser13. Over residues 18 to 31 (PRKRSSRHRGKVKS) the composition is skewed to basic residues. Lys39 participates in a covalent cross-link: Glycyl lysine isopeptide (Lys-Gly) (interchain with G-Cter in SUMO2). An N6-acetyllysine modification is found at Lys136. Glycyl lysine isopeptide (Lys-Gly) (interchain with G-Cter in SUMO2) cross-links involve residues Lys224 and Lys226. His245 carries the tele-methylhistidine modification. Residues Lys286 and Lys294 each carry the N6-acetyllysine; alternate modification. Residue Lys286 forms a Glycyl lysine isopeptide (Lys-Gly) (interchain with G-Cter in SUMO2); alternate linkage. Lys294 is covalently cross-linked (Glycyl lysine isopeptide (Lys-Gly) (interchain with G-Cter in SUMO1); alternate). Phosphoserine is present on Ser304. N6-acetyllysine; alternate is present on Lys366. A Glycyl lysine isopeptide (Lys-Gly) (interchain with G-Cter in SUMO2); alternate cross-link involves residue Lys366. Lys373 is subject to N6-acetyllysine. Glycyl lysine isopeptide (Lys-Gly) (interchain with G-Cter in SUMO2) cross-links involve residues Lys386, Lys393, and Lys399.

This sequence belongs to the universal ribosomal protein uL3 family. Component of the large ribosomal subunit. Interacts with DHX33. In terms of processing, constitutively monomethylated at His-245 by METTL18. Methylation at His-245 regulates translation elongation by slowing ribosome traversal on tyrosine codons: slower elongation provides enough time for proper folding of synthesized proteins and prevents cellular aggregation of tyrosine-rich proteins It is not required for incorporation of RPL3 into ribosomes.

It localises to the nucleus. Its subcellular location is the nucleolus. The protein localises to the cytoplasm. Its function is as follows. Component of the large ribosomal subunit. The ribosome is a large ribonucleoprotein complex responsible for the synthesis of proteins in the cell. This Sus scrofa (Pig) protein is Large ribosomal subunit protein uL3 (RPL3).